A 155-amino-acid chain; its full sequence is 6,7-dimethyl-8-ribityllumazine synthase (155 aa).

Residues Phe-23, 57–59, and 81–83 contribute to the 5-amino-6-(D-ribitylamino)uracil site; these read AFE and AVI. 86 to 87 contacts (2S)-2-hydroxy-3-oxobutyl phosphate; that stretch reads ST. His-89 functions as the Proton donor in the catalytic mechanism. Residue Phe-114 coordinates 5-amino-6-(D-ribitylamino)uracil. Arg-128 contributes to the (2S)-2-hydroxy-3-oxobutyl phosphate binding site.

The protein belongs to the DMRL synthase family.

The catalysed reaction is (2S)-2-hydroxy-3-oxobutyl phosphate + 5-amino-6-(D-ribitylamino)uracil = 6,7-dimethyl-8-(1-D-ribityl)lumazine + phosphate + 2 H2O + H(+). The protein operates within cofactor biosynthesis; riboflavin biosynthesis; riboflavin from 2-hydroxy-3-oxobutyl phosphate and 5-amino-6-(D-ribitylamino)uracil: step 1/2. In terms of biological role, catalyzes the formation of 6,7-dimethyl-8-ribityllumazine by condensation of 5-amino-6-(D-ribitylamino)uracil with 3,4-dihydroxy-2-butanone 4-phosphate. This is the penultimate step in the biosynthesis of riboflavin. The protein is 6,7-dimethyl-8-ribityllumazine synthase of Dehalococcoides mccartyi (strain ATCC BAA-2266 / KCTC 15142 / 195) (Dehalococcoides ethenogenes (strain 195)).